Consider the following 149-residue polypeptide: HTH-type transcriptional regulator LrpB (149 aa).

The HTH asnC-type domain maps to 3–64; that stretch reads IDSIDFQILQ…VVDELKMGFS (62 aa). Positions 22–41 form a DNA-binding region, H-T-H motif; the sequence is WKEIGEKIHMTGQAVGNRIK.

Functionally, negative regulation of glyA transcription and kinB-dependent sporulation. The chain is HTH-type transcriptional regulator LrpB (lrpB) from Bacillus subtilis (strain 168).